Reading from the N-terminus, the 453-residue chain is Tol-Pal system protein TolB (453 aa).

The signal sequence occupies residues 1–39; sequence MSFIPNTEAEALSALFSRRSVLGATAAGGLLATPLAAFA.

Belongs to the TolB family. In terms of assembly, the Tol-Pal system is composed of five core proteins: the inner membrane proteins TolA, TolQ and TolR, the periplasmic protein TolB and the outer membrane protein Pal. They form a network linking the inner and outer membranes and the peptidoglycan layer.

The protein resides in the periplasm. In terms of biological role, part of the Tol-Pal system, which plays a role in outer membrane invagination during cell division and is important for maintaining outer membrane integrity. The polypeptide is Tol-Pal system protein TolB (Gluconobacter oxydans (strain 621H) (Gluconobacter suboxydans)).